A 680-amino-acid chain; its full sequence is UvrABC system protein C (680 aa).

Residues 66–144 (NSPGVYRMFN…IKRLRPRFNV (79 aa)) form the GIY-YIG domain. In terms of domain architecture, UVR spans 254 to 289 (QKVKSHMAEAMNQAAEDLDFERAAIYRDRLAALSHV).

This sequence belongs to the UvrC family. Interacts with UvrB in an incision complex.

It localises to the cytoplasm. In terms of biological role, the UvrABC repair system catalyzes the recognition and processing of DNA lesions. UvrC both incises the 5' and 3' sides of the lesion. The N-terminal half is responsible for the 3' incision and the C-terminal half is responsible for the 5' incision. This Rhizobium johnstonii (strain DSM 114642 / LMG 32736 / 3841) (Rhizobium leguminosarum bv. viciae) protein is UvrABC system protein C.